The chain runs to 392 residues: Phosphoprotein (392 aa).

Disordered regions lie at residues 61–107 (ESTN…GLDS) and 152–182 (PIATSSPIDFKRGAGIPAGSIEGSTQSDGWE). A multimerization region spans residues 217-280 (LNVNEILNTV…ITTVKIMDPG (64 aa)). Residues 219–246 (VNEILNTVRNLDSRMNQLETKVDRILSS) adopt a coiled-coil conformation.

Belongs to the rubulavirus/avulavirus P protein family. As to quaternary structure, homotetramer. Interacts (via multimerization domain) with polymerase L; this interaction forms the polymerase L-P complex. Interacts (via N-terminus) with N0 (via Ncore); this interaction allows P to chaperon N0 to avoid N polymerization before encapsidation. Interacts (via C-terminus) with N-RNA template; this interaction positions the polymerase on the template for both transcription and replication.

In terms of biological role, essential cofactor of the RNA polymerase L that plays a central role in the transcription and replication by forming the polymerase complex with RNA polymerase L and recruiting L to the genomic N-RNA template for RNA synthesis. Also plays a central role in the encapsidation of nascent RNA chains by forming the encapsidation complex with the nucleocapsid protein N (N-P complex). Acts as a chaperone for newly synthesized free N protein, so-called N0, allowing encapsidation of nascent RNA chains during replication. The nucleoprotein protein N prevents excessive phosphorylation of P, which leads to down-regulation of viral transcription/ replication. Participates, together with N, in the formation of viral factories (viroplasms), which are large inclusions in the host cytoplasm where replication takes place. This is Phosphoprotein (P/V) from Canis lupus familiaris (Dog).